A 344-amino-acid chain; its full sequence is Fructose-bisphosphate aldolase (344 aa).

D-glyceraldehyde 3-phosphate is bound at residue Ser53. Asp95 (proton donor) is an active-site residue. The Zn(2+) site is built by His96, Asp131, Glu161, and His212. Gly213 lines the dihydroxyacetone phosphate pocket. Position 252 (His252) interacts with Zn(2+). Dihydroxyacetone phosphate-binding positions include 253 to 255 (GGS) and 274 to 277 (NVDT).

This sequence belongs to the class II fructose-bisphosphate aldolase family. Requires Zn(2+) as cofactor.

It carries out the reaction beta-D-fructose 1,6-bisphosphate = D-glyceraldehyde 3-phosphate + dihydroxyacetone phosphate. Its pathway is carbohydrate degradation; glycolysis; D-glyceraldehyde 3-phosphate and glycerone phosphate from D-glucose: step 4/4. Catalyzes the aldol condensation of dihydroxyacetone phosphate (DHAP or glycerone-phosphate) with glyceraldehyde 3-phosphate (G3P) to form fructose 1,6-bisphosphate (FBP) in gluconeogenesis and the reverse reaction in glycolysis. This Corynebacterium glutamicum (strain ATCC 13032 / DSM 20300 / JCM 1318 / BCRC 11384 / CCUG 27702 / LMG 3730 / NBRC 12168 / NCIMB 10025 / NRRL B-2784 / 534) protein is Fructose-bisphosphate aldolase (fba).